We begin with the raw amino-acid sequence, 337 residues long: Protein-arginine kinase (337 aa).

The region spanning 12–240 (IVIASKVKIL…NKLILREKNQ (229 aa)) is the Phosphagen kinase C-terminal domain. Residues 15 to 19 (ASKVK), 162 to 166 (RTKVF), and 193 to 198 (KSIYNS) contribute to the ATP site.

The protein belongs to the ATP:guanido phosphotransferase family.

It carries out the reaction L-arginyl-[protein] + ATP = N(omega)-phospho-L-arginyl-[protein] + ADP + H(+). In terms of biological role, catalyzes the specific phosphorylation of arginine residues in proteins. The polypeptide is Protein-arginine kinase (Clostridium perfringens (strain 13 / Type A)).